A 182-amino-acid polypeptide reads, in one-letter code: uncharacterized protein (182 aa).

2 helical membrane-spanning segments follow: residues 29–49 (IISG…AGLP) and 63–83 (FYFP…MLTL).

It localises to the cell membrane. This is an uncharacterized protein from Ureaplasma parvum serovar 3 (strain ATCC 700970).